The following is a 502-amino-acid chain: Archaemetzincin-1 (502 aa).

His262 lines the Zn(2+) pocket. Residue Glu263 is the Proton acceptor of the active site. 5 residues coordinate Zn(2+): His266, Cys273, Cys278, Cys297, and Cys300. The disordered stretch occupies residues 336–383; it reads GEPSVSEDTLPFSADSGMGCESDTEPVTSPSEPVTPDGWSHPFPDGPE.

Belongs to the peptidase M54 family. Requires Zn(2+) as cofactor.

In terms of biological role, probable zinc metalloprotease. The protein is Archaemetzincin-1 (Amz1) of Mus musculus (Mouse).